A 936-amino-acid chain; its full sequence is Sine oculis-binding protein homolog A (936 aa).

Residues 1–14 (MAEMEKEGRPPESK) show a composition bias toward basic and acidic residues. 2 disordered regions span residues 1–46 (MAEM…GQAG) and 108–151 (ASTL…HGGL). The segment covering 108–144 (ASTLENSSGSPPHANSSGSTPTSRNGVTAESSVNPSS) has biased composition (polar residues). 2 FCS-type zinc fingers span residues 169–207 (EDSS…KCFA) and 247–287 (LKTN…KCLN). 6 disordered regions span residues 311-330 (LPTS…LTPE), 336-424 (LSEL…VMTP), 486-511 (SPHL…HPAA), 574-632 (NPQR…KQTE), 697-727 (PPPA…DTYS), and 842-877 (DSAG…EDHA). Low complexity predominate over residues 349–382 (GATIAGPSGSTSGSPSEAGTVCSSSSSSSSSSSS). A compositionally biased stretch (pro residues) spans 395 to 404 (SLPPPHPPPI). Composition is skewed to polar residues over residues 617 to 632 (PPNS…KQTE), 708 to 717 (DGSTSISTGT), and 850 to 859 (NDQSAITTGT).

This sequence belongs to the SOBP family.

In terms of biological role, implicated in development of the cochlea. This Danio rerio (Zebrafish) protein is Sine oculis-binding protein homolog A (sobpa).